The sequence spans 177 residues: Phycocyanin PC645 beta subunit (177 aa).

Residue tyrosine 18 participates in mesobiliverdin binding. 3 residues coordinate (2R,3E)-phycocyanobilin: lysine 28, asparagine 35, and aspartate 39. 15,16-dihydrobiliverdin contacts are provided by cysteine 50, aspartate 54, and cysteine 61. The (2R,3E)-phycocyanobilin site is built by asparagine 72, arginine 77, cysteine 82, arginine 84, and aspartate 85. A 15,16-dihydrobiliverdin-binding site is contributed by glutamine 148. Residues proline 154, glycine 156, and cysteine 158 each coordinate (2R,3E)-phycocyanobilin.

Belongs to the phycobiliprotein family. As to quaternary structure, heterotetramer of 2 different alpha chains and 2 identical beta chains which form 2 alpha-beta heterodimers within the heterotetramer. In terms of processing, contains two phycocyanobilin chromophores, one mesobiliverdin chromophore and one 15,16-dihydrobiliverdin chromophore with binding mediated by both the alpha and beta subunits.

The protein resides in the plastid. It localises to the chloroplast thylakoid membrane. Light-harvesting photosynthetic tetrapyrrole chromophore-protein from the phycobiliprotein complex. The chain is Phycocyanin PC645 beta subunit from Chroomonas sp. (strain CCMP270).